The chain runs to 138 residues: Ribosome-binding factor A (138 aa).

Low complexity predominate over residues 1–20; sequence MSSRPPSSSGPAGIPKGAPS. The interval 1 to 21 is disordered; sequence MSSRPPSSSGPAGIPKGAPSQ.

The protein belongs to the RbfA family. In terms of assembly, monomer. Binds 30S ribosomal subunits, but not 50S ribosomal subunits or 70S ribosomes.

The protein resides in the cytoplasm. Its function is as follows. One of several proteins that assist in the late maturation steps of the functional core of the 30S ribosomal subunit. Associates with free 30S ribosomal subunits (but not with 30S subunits that are part of 70S ribosomes or polysomes). Required for efficient processing of 16S rRNA. May interact with the 5'-terminal helix region of 16S rRNA. This Granulibacter bethesdensis (strain ATCC BAA-1260 / CGDNIH1) protein is Ribosome-binding factor A.